The sequence spans 148 residues: Large ribosomal subunit protein bL9 (148 aa).

It belongs to the bacterial ribosomal protein bL9 family.

Binds to the 23S rRNA. This Pseudomonas savastanoi pv. phaseolicola (strain 1448A / Race 6) (Pseudomonas syringae pv. phaseolicola (strain 1448A / Race 6)) protein is Large ribosomal subunit protein bL9.